The following is a 438-amino-acid chain: tRNA-2-methylthio-N(6)-dimethylallyladenosine synthase (438 aa).

The MTTase N-terminal domain occupies 4–120 (KKLYIDTVGC…VPEMVKDAEA (117 aa)). [4Fe-4S] cluster is bound by residues Cys-13, Cys-49, Cys-83, Cys-158, Cys-162, and Cys-165. The Radical SAM core domain maps to 144 to 377 (GRKRVSAFVT…QAVHSRIHNE (234 aa)). The TRAM domain maps to 377–438 (ETYVGSTQQV…YANSLLGELL (62 aa)).

Belongs to the methylthiotransferase family. MiaB subfamily. Monomer. The cofactor is [4Fe-4S] cluster.

Its subcellular location is the cytoplasm. The catalysed reaction is N(6)-dimethylallyladenosine(37) in tRNA + (sulfur carrier)-SH + AH2 + 2 S-adenosyl-L-methionine = 2-methylsulfanyl-N(6)-dimethylallyladenosine(37) in tRNA + (sulfur carrier)-H + 5'-deoxyadenosine + L-methionine + A + S-adenosyl-L-homocysteine + 2 H(+). In terms of biological role, catalyzes the methylthiolation of N6-(dimethylallyl)adenosine (i(6)A), leading to the formation of 2-methylthio-N6-(dimethylallyl)adenosine (ms(2)i(6)A) at position 37 in tRNAs that read codons beginning with uridine. This Trichlorobacter lovleyi (strain ATCC BAA-1151 / DSM 17278 / SZ) (Geobacter lovleyi) protein is tRNA-2-methylthio-N(6)-dimethylallyladenosine synthase.